The chain runs to 327 residues: Phenylalanine--tRNA ligase alpha subunit (327 aa).

Glutamate 252 contributes to the Mg(2+) binding site.

Belongs to the class-II aminoacyl-tRNA synthetase family. Phe-tRNA synthetase alpha subunit type 1 subfamily. Tetramer of two alpha and two beta subunits. It depends on Mg(2+) as a cofactor.

The protein resides in the cytoplasm. The enzyme catalyses tRNA(Phe) + L-phenylalanine + ATP = L-phenylalanyl-tRNA(Phe) + AMP + diphosphate + H(+). This is Phenylalanine--tRNA ligase alpha subunit from Haemophilus ducreyi (strain 35000HP / ATCC 700724).